Reading from the N-terminus, the 1329-residue chain is Putative protein tag-53 (1329 aa).

The 28-residue stretch at 65–92 (SCDKPCYNGVCLNKACVCSKGWYGSQCD) folds into the EGF-like 1 domain. Intrachain disulfides connect Cys-66-Cys-75, Cys-70-Cys-80, Cys-82-Cys-91, Cys-94-Cys-120, and Cys-144-Cys-166. The 110-residue stretch at 94–203 (CFGRIRISDN…NGFNVSYESN (110 aa)) folds into the CUB domain. N-linked (GlcNAc...) asparagine glycosylation occurs at Asn-103. Residues Asn-197 and Asn-208 are each glycosylated (N-linked (GlcNAc...) asparagine). EGF-like domains are found at residues 204-232 (RCAYNCSNHGSCLNGKCDCEDGYKGLNCE) and 235-270 (VCQLSGKSTESPCHEGQCVDGRCECLSARVHGETCQ). Disulfide bonds link Cys-205/Cys-215, Cys-209/Cys-220, Cys-222/Cys-231, Cys-236/Cys-252, Cys-247/Cys-257, and Cys-259/Cys-269. Kelch repeat units lie at residues 302–353 (VVWS…KYKN), 355–408 (LYMF…VAGH), 416–463 (EMFV…AVEY), 471–518 (AILV…YLNG), 520–575 (MVVV…VIGQ), and 577–619 (LYAL…KCVF). N-linked (GlcNAc...) asparagine glycosylation is found at Asn-324, Asn-395, Asn-447, Asn-481, Asn-529, and Asn-555. Asn-820 carries an N-linked (GlcNAc...) asparagine glycan. Asn-832 carries N-linked (GlcNAc...) asparagine; atypical glycosylation. Asn-833 and Asn-934 each carry an N-linked (GlcNAc...) asparagine glycan. Disulfide bonds link Cys-945–Cys-953, Cys-947–Cys-968, Cys-971–Cys-980, Cys-983–Cys-997, Cys-1000–Cys-1009, Cys-1002–Cys-1016, Cys-1018–Cys-1028, and Cys-1031–Cys-1045. Laminin EGF-like domains lie at 945–999 (CQCN…VCSP) and 1000–1047 (CDCH…PCFY). Residues 952-998 (TCFTSVGSFPPVTIEKCQSCQNHTTGAHCERCAPGFYGDARNGGVCS) enclose the EGF-like 4 domain. Asn-973 carries an N-linked (GlcNAc...) asparagine glycan. Asn-1066, Asn-1102, and Asn-1147 each carry an N-linked (GlcNAc...) asparagine glycan. A helical membrane pass occupies residues 1176 to 1196 (VLFFVIFAACFIVLLVVAGLL). The Cytoplasmic segment spans residues 1197-1329 (WMIKVRIEAY…TIRQRPNNND (133 aa)).

It localises to the membrane. This chain is Putative protein tag-53 (tag-53), found in Caenorhabditis elegans.